A 203-amino-acid chain; its full sequence is UPF0637 protein MCCL_0722 (203 aa).

The protein belongs to the UPF0637 family.

The protein is UPF0637 protein MCCL_0722 of Macrococcus caseolyticus (strain JCSC5402) (Macrococcoides caseolyticum).